A 100-amino-acid chain; its full sequence is Urease subunit gamma (100 aa).

Belongs to the urease gamma subunit family. In terms of assembly, heterotrimer of UreA (gamma), UreB (beta) and UreC (alpha) subunits. Three heterotrimers associate to form the active enzyme.

Its subcellular location is the cytoplasm. The enzyme catalyses urea + 2 H2O + H(+) = hydrogencarbonate + 2 NH4(+). It functions in the pathway nitrogen metabolism; urea degradation; CO(2) and NH(3) from urea (urease route): step 1/1. The sequence is that of Urease subunit gamma from Ruegeria sp. (strain TM1040) (Silicibacter sp.).